Reading from the N-terminus, the 54-residue chain is uncharacterized protein (54 aa).

The chain crosses the membrane as a helical span at residues 6–26; the sequence is ILIYLLIFVAGIVIGKIRINV.

Its subcellular location is the host membrane. This is an uncharacterized protein from Acidianus convivator (ABV).